The chain runs to 274 residues: Large ribosomal subunit protein uL2 (274 aa).

Disordered regions lie at residues 28-55 (APHA…RHVG) and 224-274 (VAMN…RRRK).

Belongs to the universal ribosomal protein uL2 family. In terms of assembly, part of the 50S ribosomal subunit. Forms a bridge to the 30S subunit in the 70S ribosome.

Its function is as follows. One of the primary rRNA binding proteins. Required for association of the 30S and 50S subunits to form the 70S ribosome, for tRNA binding and peptide bond formation. It has been suggested to have peptidyltransferase activity; this is somewhat controversial. Makes several contacts with the 16S rRNA in the 70S ribosome. In Pseudomonas putida (strain W619), this protein is Large ribosomal subunit protein uL2.